We begin with the raw amino-acid sequence, 83 residues long: Small ribosomal subunit protein uS17 (83 aa).

Belongs to the universal ribosomal protein uS17 family. In terms of assembly, part of the 30S ribosomal subunit.

Its function is as follows. One of the primary rRNA binding proteins, it binds specifically to the 5'-end of 16S ribosomal RNA. In Acaryochloris marina (strain MBIC 11017), this protein is Small ribosomal subunit protein uS17.